The following is a 335-amino-acid chain: tRNA N6-adenosine threonylcarbamoyltransferase (335 aa).

A divalent metal cation is bound by residues histidine 109, histidine 113, and tyrosine 130. Residues 130–134 (YVSGG), aspartate 162, glycine 177, glutamate 181, and asparagine 266 contribute to the substrate site. Aspartate 294 lines the a divalent metal cation pocket.

This sequence belongs to the KAE1 / TsaD family. Component of the EKC/KEOPS complex composed of at least tp53rk, tprkb, osgep and lage3; the whole complex dimerizes. Requires a divalent metal cation as cofactor.

It localises to the cytoplasm. The protein resides in the nucleus. The catalysed reaction is L-threonylcarbamoyladenylate + adenosine(37) in tRNA = N(6)-L-threonylcarbamoyladenosine(37) in tRNA + AMP + H(+). Functionally, component of the EKC/KEOPS complex that is required for the formation of a threonylcarbamoyl group on adenosine at position 37 (t(6)A37) in tRNAs that read codons beginning with adenine. The complex is probably involved in the transfer of the threonylcarbamoyl moiety of threonylcarbamoyl-AMP (TC-AMP) to the N6 group of A37. Osgep likely plays a direct catalytic role in this reaction, but requires other protein(s) of the complex to fulfill this activity. The polypeptide is tRNA N6-adenosine threonylcarbamoyltransferase (Xenopus laevis (African clawed frog)).